The sequence spans 163 residues: Photosystem II extrinsic protein V (163 aa).

The signal sequence occupies residues 1 to 26; the sequence is MLKRSSWLAALLGLLTVVSTSTHTYA. 4 residues coordinate heme c: Cys-63, Cys-66, His-67, and His-118.

It belongs to the cytochrome c family. PsbV subfamily. As to quaternary structure, PSII is composed of 1 copy each of membrane proteins PsbA, PsbB, PsbC, PsbD, PsbE, PsbF, PsbH, PsbI, PsbJ, PsbK, PsbL, PsbM, PsbT, PsbY, PsbZ, Psb30/Ycf12, at least 3 peripheral proteins of the oxygen-evolving complex and a large number of cofactors. It forms dimeric complexes. The extrinsic subunits in red algae are PsbO (OEC33), PsbQ', cytochrome c-550 and PsbU. The cofactor is heme c.

The protein resides in the plastid. The protein localises to the chloroplast thylakoid membrane. In terms of biological role, one of the extrinsic, lumenal subunits of photosystem II (PSII). PSII is a light-driven water plastoquinone oxidoreductase, using light energy to abstract electrons from H(2)O, generating a proton gradient subsequently used for ATP formation. The extrinsic proteins stabilize the structure of photosystem II oxygen-evolving complex (OEC), the ion environment of oxygen evolution and protect the OEC against heat-induced inactivation. This is Photosystem II extrinsic protein V from Pyropia yezoensis (Susabi-nori).